A 144-amino-acid polypeptide reads, in one-letter code: Large ribosomal subunit protein uL11 (144 aa).

It belongs to the universal ribosomal protein uL11 family. As to quaternary structure, part of the ribosomal stalk of the 50S ribosomal subunit. Interacts with L10 and the large rRNA to form the base of the stalk. L10 forms an elongated spine to which L12 dimers bind in a sequential fashion forming a multimeric L10(L12)X complex. In terms of processing, one or more lysine residues are methylated.

In terms of biological role, forms part of the ribosomal stalk which helps the ribosome interact with GTP-bound translation factors. The protein is Large ribosomal subunit protein uL11 of Frankia alni (strain DSM 45986 / CECT 9034 / ACN14a).